Consider the following 202-residue polypeptide: dITP/XTP pyrophosphatase (202 aa).

Residue 10–15 (TSNRHK) coordinates substrate. Residue aspartate 70 is the Proton acceptor of the active site. Residue aspartate 70 participates in Mg(2+) binding. Residues serine 71, 153–156 (FGYD), lysine 176, and 181–182 (HR) each bind substrate.

It belongs to the HAM1 NTPase family. As to quaternary structure, homodimer. It depends on Mg(2+) as a cofactor.

It carries out the reaction XTP + H2O = XMP + diphosphate + H(+). The enzyme catalyses dITP + H2O = dIMP + diphosphate + H(+). It catalyses the reaction ITP + H2O = IMP + diphosphate + H(+). In terms of biological role, pyrophosphatase that catalyzes the hydrolysis of nucleoside triphosphates to their monophosphate derivatives, with a high preference for the non-canonical purine nucleotides XTP (xanthosine triphosphate), dITP (deoxyinosine triphosphate) and ITP. Seems to function as a house-cleaning enzyme that removes non-canonical purine nucleotides from the nucleotide pool, thus preventing their incorporation into DNA/RNA and avoiding chromosomal lesions. In Methylacidiphilum infernorum (isolate V4) (Methylokorus infernorum (strain V4)), this protein is dITP/XTP pyrophosphatase.